Reading from the N-terminus, the 100-residue chain is UPF0125 protein HD_1828 (100 aa).

It belongs to the UPF0125 (RnfH) family.

The polypeptide is UPF0125 protein HD_1828 (Haemophilus ducreyi (strain 35000HP / ATCC 700724)).